A 1365-amino-acid chain; its full sequence is DNA-directed RNA polymerase subunit beta' (1365 aa).

4 residues coordinate Zn(2+): C249, C316, C323, and C326.

Belongs to the RNA polymerase beta' chain family. RpoC2 subfamily. In terms of assembly, in cyanobacteria the RNAP catalytic core is composed of 2 alpha, 1 beta, 1 beta', 1 gamma and 1 omega subunit. When a sigma factor is associated with the core the holoenzyme is formed, which can initiate transcription. The cofactor is Zn(2+).

The enzyme catalyses RNA(n) + a ribonucleoside 5'-triphosphate = RNA(n+1) + diphosphate. Its function is as follows. DNA-dependent RNA polymerase catalyzes the transcription of DNA into RNA using the four ribonucleoside triphosphates as substrates. This Synechococcus sp. (strain CC9311) protein is DNA-directed RNA polymerase subunit beta'.